The primary structure comprises 235 residues: MGGDALTFKLFGLTFNTTNIVSGLIIYAIVFFTLYGMSRKIQMKPTGAQNVFEWLVDFTNGIVRSQMPASEQGHYSFFAFVLFVFIFFANQFGLIFQFHWNGAEVLRSPTADPVVTLTLSLMVMVLAFAAGVAHNGLGGYLKGYTKPFTLMLPVNIIEDFANFLTLGLRIFGNIFAGELLMSLIANMAFSHGILTIIPGLFLELAWQGFSVFIGSIQAYVFVTLTTVYISRKISE.

A run of 5 helical transmembrane segments spans residues 17–37 (TTNI…LYGM), 76–96 (SFFA…GLIF), 113–133 (PVVT…AGVA), 179–201 (LLMS…PGLF), and 211–230 (VFIG…VYIS).

This sequence belongs to the ATPase A chain family. F-type ATPases have 2 components, CF(1) - the catalytic core - and CF(0) - the membrane proton channel. CF(1) has five subunits: alpha(3), beta(3), gamma(1), delta(1), epsilon(1). CF(0) has three main subunits: a(1), b(2) and c(9-12). The alpha and beta chains form an alternating ring which encloses part of the gamma chain. CF(1) is attached to CF(0) by a central stalk formed by the gamma and epsilon chains, while a peripheral stalk is formed by the delta and b chains.

It is found in the cell membrane. Its function is as follows. Key component of the proton channel; it plays a direct role in the translocation of protons across the membrane. The chain is ATP synthase subunit a from Limosilactobacillus reuteri subsp. reuteri (strain JCM 1112) (Lactobacillus reuteri).